A 348-amino-acid chain; its full sequence is Protein RecA (348 aa).

66-73 lines the ATP pocket; sequence GPESSGKT.

This sequence belongs to the RecA family.

It is found in the cytoplasm. Its function is as follows. Can catalyze the hydrolysis of ATP in the presence of single-stranded DNA, the ATP-dependent uptake of single-stranded DNA by duplex DNA, and the ATP-dependent hybridization of homologous single-stranded DNAs. It interacts with LexA causing its activation and leading to its autocatalytic cleavage. The polypeptide is Protein RecA (Neisseria meningitidis serogroup C / serotype 2a (strain ATCC 700532 / DSM 15464 / FAM18)).